A 346-amino-acid polypeptide reads, in one-letter code: NADH-ubiquinone oxidoreductase chain 2 (346 aa).

10 helical membrane-spanning segments follow: residues His-25–Ser-45, Phe-60–Ala-80, Cys-95–Phe-115, Leu-124–Met-144, Leu-149–Gly-169, Ile-178–Val-195, Leu-200–Leu-219, Val-247–Ile-267, Glu-274–Leu-294, and Ala-326–Val-346.

It belongs to the complex I subunit 2 family.

It localises to the mitochondrion inner membrane. The enzyme catalyses a ubiquinone + NADH + 5 H(+)(in) = a ubiquinol + NAD(+) + 4 H(+)(out). Functionally, core subunit of the mitochondrial membrane respiratory chain NADH dehydrogenase (Complex I) that is believed to belong to the minimal assembly required for catalysis. Complex I functions in the transfer of electrons from NADH to the respiratory chain. The immediate electron acceptor for the enzyme is believed to be ubiquinone. The sequence is that of NADH-ubiquinone oxidoreductase chain 2 (MT-ND2) from Anas capensis (Cape teal).